The primary structure comprises 341 residues: D-aspartate oxidase (341 aa).

D36, K37, T43, S44, M50, G307, I311, and S312 together coordinate FAD. Positions 339–341 match the Microbody targeting signal motif; the sequence is SNL.

Belongs to the DAMOX/DASOX family. Monomer. Interacts with PEX5; the interaction is direct and required for localization of DDO to the peroxisome. Interacts with DAOA; the interaction is direct and increases the degradation rate of DDO. FAD serves as cofactor. May be S-nitrosylated. As to expression, expressed in epithelial cells of the proximal nephron tubules in the renal cortex (at protein level). In the brain, expressed in the frontal, temporal, and occipital lobes of the cortex, hippocampus, striatum, diencephalon, brainstem, cerebellum, spinal cord, plexus choroiderus and ependyma (at protein level). Expression is increased in the prefrontal cortex of schizophrenic patients. Levels are normal in the superior frontal gyrus of patients with Alzheimer's disease.

The protein resides in the peroxisome matrix. It is found in the cytoplasm. Its subcellular location is the cytosol. The enzyme catalyses D-aspartate + O2 + H2O = oxaloacetate + H2O2 + NH4(+). It catalyses the reaction D-glutamate + O2 + H2O = H2O2 + 2-oxoglutarate + NH4(+). With respect to regulation, inhibited by the benzodiazepine olanzapine. Inhibited by aminooxyacetic acid, thiolactomycin, malonate and meso-tartrate. Clozapine, haloperidol and chlorpromazine have no effect on activity. Not inhibited by sodium, potassium, magnesium, iron, calcium, cobalt, copper, nickel, manganese or zinc ions. Not inhibited by AMP, ADP, ATP, or cAMP. Not inhibited by pyridoxal 5'-phosphate. Its function is as follows. Selectively catalyzes the oxidative deamination of acidic amino acids. Suppresses the level of D-aspartate in the brain, an amino acid that can act as an agonist for glutamate receptors. Protects the organism from the toxicity of D-amino acids. May also function in the intestine. This Homo sapiens (Human) protein is D-aspartate oxidase (DDO).